Here is a 41-residue protein sequence, read N- to C-terminus: Photosystem I reaction center subunit IX (41 aa).

Residues 7-27 (YLSTAPVLATVWMIITAGILI) traverse the membrane as a helical segment.

It belongs to the PsaJ family.

It is found in the cellular thylakoid membrane. Functionally, may help in the organization of the PsaE and PsaF subunits. The sequence is that of Photosystem I reaction center subunit IX from Trichodesmium erythraeum (strain IMS101).